The chain runs to 430 residues: Adenylosuccinate synthetase (430 aa).

Residues G13 to K19 and G41 to T43 each bind GTP. The Proton acceptor role is filled by D14. 2 residues coordinate Mg(2+): D14 and G41. IMP is bound by residues D14–K17, N39–H42, T130, R144, Q225, T240, and R304. The active-site Proton donor is H42. Position 300 to 306 (S300 to R306) interacts with substrate. GTP is bound by residues R306, K332–D334, and S414–G416.

This sequence belongs to the adenylosuccinate synthetase family. Homodimer. Mg(2+) is required as a cofactor.

It is found in the cytoplasm. It carries out the reaction IMP + L-aspartate + GTP = N(6)-(1,2-dicarboxyethyl)-AMP + GDP + phosphate + 2 H(+). Its pathway is purine metabolism; AMP biosynthesis via de novo pathway; AMP from IMP: step 1/2. Plays an important role in the de novo pathway of purine nucleotide biosynthesis. Catalyzes the first committed step in the biosynthesis of AMP from IMP. This is Adenylosuccinate synthetase from Thioalkalivibrio sulfidiphilus (strain HL-EbGR7).